The sequence spans 77 residues: uncharacterized protein (77 aa).

This is an uncharacterized protein from Saccharomyces cerevisiae (strain ATCC 204508 / S288c) (Baker's yeast).